The sequence spans 290 residues: PIH1 domain-containing protein 1 (290 aa).

3 positions are modified to phosphoserine: Ser-12, Ser-16, and Ser-173.

Belongs to the PIH1 family. Component of the R2TP complex composed at least of RUVBL1, RUVBL2, RPAP3 and PIHD1. Component of the PAQosome complex which is responsible for the biogenesis of several protein complexes and which consists of R2TP complex members RUVBL1, RUVBL2, RPAP3 and PIH1D1, URI complex members PFDN2, PFDN6, PDRG1, UXT and URI1 as well as ASDURF, POLR2E and DNAAF10/WDR92. Interacts with phosphorylated TELO2 and mediates interaction of TELO2 with the R2TP complex. Interacts with phosphorylated ECD, EFTUD2/SNRP116, RPB1 and UBR5 and with RPB1 in a phosphorylation-independent manner. Interacts with the core C/D box snoRNP particle components NOP58 and FBL and with RUVBL1/TIP49. Interacts with RPAP3 and DNAAF10. Interacts with histone H4 and with SWI/SNF complex member SMARCB1/SNF5. Interacts with the mTORC1 complex member RPTOR. Interacts with MSL1.

Its subcellular location is the nucleus. Involved in the assembly of C/D box small nucleolar ribonucleoprotein (snoRNP) particles. Recruits the SWI/SNF complex to the core promoter of rRNA genes and enhances pre-rRNA transcription. Mediates interaction of TELO2 with the R2TP complex which is necessary for the stability of MTOR and SMG1. Positively regulates the assembly and activity of the mTORC1 complex. This chain is PIH1 domain-containing protein 1 (Pih1d1), found in Rattus norvegicus (Rat).